A 104-amino-acid polypeptide reads, in one-letter code: Large ribosomal subunit protein uL23 (104 aa).

The protein belongs to the universal ribosomal protein uL23 family. As to quaternary structure, part of the 50S ribosomal subunit. Contacts protein L29, and trigger factor when it is bound to the ribosome.

Its function is as follows. One of the early assembly proteins it binds 23S rRNA. One of the proteins that surrounds the polypeptide exit tunnel on the outside of the ribosome. Forms the main docking site for trigger factor binding to the ribosome. This is Large ribosomal subunit protein uL23 from Neisseria meningitidis serogroup B (strain ATCC BAA-335 / MC58).